A 330-amino-acid chain; its full sequence is Methionyl-tRNA formyltransferase (330 aa).

Position 116–119 (116–119 (SLLP)) interacts with (6S)-5,6,7,8-tetrahydrofolate.

It belongs to the Fmt family.

It carries out the reaction L-methionyl-tRNA(fMet) + (6R)-10-formyltetrahydrofolate = N-formyl-L-methionyl-tRNA(fMet) + (6S)-5,6,7,8-tetrahydrofolate + H(+). Functionally, attaches a formyl group to the free amino group of methionyl-tRNA(fMet). The formyl group appears to play a dual role in the initiator identity of N-formylmethionyl-tRNA by promoting its recognition by IF2 and preventing the misappropriation of this tRNA by the elongation apparatus. This Nitratidesulfovibrio vulgaris (strain ATCC 29579 / DSM 644 / CCUG 34227 / NCIMB 8303 / VKM B-1760 / Hildenborough) (Desulfovibrio vulgaris) protein is Methionyl-tRNA formyltransferase.